The sequence spans 67 residues: Large ribosomal subunit protein uL29 (67 aa).

Belongs to the universal ribosomal protein uL29 family.

The chain is Large ribosomal subunit protein uL29 from Wolbachia sp. subsp. Drosophila simulans (strain wRi).